The following is a 170-amino-acid chain: tRNA-splicing endonuclease (170 aa).

Catalysis depends on residues Tyr110, His116, and Lys147.

The protein belongs to the tRNA-intron endonuclease family. Archaeal short subfamily. As to quaternary structure, homotetramer; although the tetramer contains four active sites, only two participate in the cleavage. Therefore, it should be considered as a dimer of dimers.

It carries out the reaction pretRNA = a 3'-half-tRNA molecule with a 5'-OH end + a 5'-half-tRNA molecule with a 2',3'-cyclic phosphate end + an intron with a 2',3'-cyclic phosphate and a 5'-hydroxyl terminus.. Endonuclease that removes tRNA introns. Cleaves pre-tRNA at the 5'- and 3'-splice sites to release the intron. The products are an intron and two tRNA half-molecules bearing 2',3' cyclic phosphate and 5'-OH termini. Recognizes a pseudosymmetric substrate in which 2 bulged loops of 3 bases are separated by a stem of 4 bp. This Pyrococcus furiosus (strain ATCC 43587 / DSM 3638 / JCM 8422 / Vc1) protein is tRNA-splicing endonuclease.